The following is a 782-amino-acid chain: Lysosome membrane protein 2-C (782 aa).

Residues 1–7 (MVANNKG) lie on the Cytoplasmic side of the membrane. A helical transmembrane segment spans residues 8–28 (LLIAGLLLSVIGAALFVISLA). Over 29 to 739 (LLPSVLNVAT…QQFKQIQTVK (711 aa)) the chain is Lumenal. 22 N-linked (GlcNAc...) asparagine glycosylation sites follow: asparagine 77, asparagine 105, asparagine 191, asparagine 219, asparagine 234, asparagine 243, asparagine 281, asparagine 368, asparagine 387, asparagine 401, asparagine 427, asparagine 432, asparagine 451, asparagine 465, asparagine 501, asparagine 536, asparagine 540, asparagine 595, asparagine 605, asparagine 613, asparagine 646, and asparagine 692. A helical transmembrane segment spans residues 740–760 (IAPVVVVSIFGGILLIAGLVM). The Cytoplasmic segment spans residues 761–782 (AINGFRKTFYNNNQYNGYNIIN). The short motif at 777-781 (GYNII) is the Tyrosine-type lysosomal sorting signal element.

The protein belongs to the CD36 family. In terms of processing, heavily glycosylated.

It localises to the lysosome membrane. Its function is as follows. May act as a lysosomal receptor. May be involved role in macropinocytosis and fluid phase exocytosis. The polypeptide is Lysosome membrane protein 2-C (lmpC) (Dictyostelium discoideum (Social amoeba)).